The following is a 327-amino-acid chain: Elongation factor P--(R)-beta-lysine ligase (327 aa).

Substrate is bound at residue Ser-80–Glu-82. ATP-binding positions include Arg-104–Glu-106 and Asn-113. Substrate is bound at residue Tyr-122. An ATP-binding site is contributed by Glu-246–Leu-247. Glu-253 provides a ligand contact to substrate. Residue Gly-302 participates in ATP binding.

This sequence belongs to the class-II aminoacyl-tRNA synthetase family. EpmA subfamily. Homodimer.

The catalysed reaction is D-beta-lysine + L-lysyl-[protein] + ATP = N(6)-((3R)-3,6-diaminohexanoyl)-L-lysyl-[protein] + AMP + diphosphate + H(+). Functionally, with EpmB is involved in the beta-lysylation step of the post-translational modification of translation elongation factor P (EF-P). Catalyzes the ATP-dependent activation of (R)-beta-lysine produced by EpmB, forming a lysyl-adenylate, from which the beta-lysyl moiety is then transferred to the epsilon-amino group of a conserved specific lysine residue in EF-P. This Haemophilus ducreyi (strain 35000HP / ATCC 700724) protein is Elongation factor P--(R)-beta-lysine ligase.